Here is an 80-residue protein sequence, read N- to C-terminus: RNA-binding protein Hfq (80 aa).

The region spanning 10–70 (DLFLNTVRKQ…ISTIMPGQPL (61 aa)) is the Sm domain.

The protein belongs to the Hfq family. As to quaternary structure, homohexamer.

Its function is as follows. RNA chaperone that binds small regulatory RNA (sRNAs) and mRNAs to facilitate mRNA translational regulation in response to envelope stress, environmental stress and changes in metabolite concentrations. Also binds with high specificity to tRNAs. In Rhizobium meliloti (strain 1021) (Ensifer meliloti), this protein is RNA-binding protein Hfq.